Consider the following 276-residue polypeptide: Diaminopimelate epimerase (276 aa).

N11, Q44, and N64 together coordinate substrate. C73 acts as the Proton donor in catalysis. Residues 74-75 (GN), N157, N190, and 208-209 (ER) contribute to the substrate site. The Proton acceptor role is filled by C217. 218–219 (GS) is a substrate binding site.

Belongs to the diaminopimelate epimerase family. As to quaternary structure, homodimer.

The protein resides in the cytoplasm. It carries out the reaction (2S,6S)-2,6-diaminopimelate = meso-2,6-diaminopimelate. It participates in amino-acid biosynthesis; L-lysine biosynthesis via DAP pathway; DL-2,6-diaminopimelate from LL-2,6-diaminopimelate: step 1/1. In terms of biological role, catalyzes the stereoinversion of LL-2,6-diaminopimelate (L,L-DAP) to meso-diaminopimelate (meso-DAP), a precursor of L-lysine and an essential component of the bacterial peptidoglycan. The sequence is that of Diaminopimelate epimerase from Blochmanniella floridana.